Here is a 421-residue protein sequence, read N- to C-terminus: Probable N-acetylgalactosaminyltransferase 8 (421 aa).

Over 1–3 (MRR) the chain is Cytoplasmic. A helical; Signal-anchor for type II membrane protein membrane pass occupies residues 4–24 (HVVLSIFVFAGIVFAAEEAEK). Residues 25 to 421 (LPKCEHVDPY…ELEPKVHDEL (397 aa)) lie on the Lumenal side of the membrane. N-linked (GlcNAc...) asparagine glycosylation is found at Asn-52 and Asn-58. 2 disulfide bridges follow: Cys-98/Cys-331 and Cys-322/Cys-399. Residues 106–219 (SYSTSVVVIH…ERWLEPLLQP (114 aa)) are catalytic subdomain A. 2 residues coordinate substrate: Asp-147 and Arg-180. Mn(2+) is bound at residue Asp-203. Position 204 (Ser-204) interacts with substrate. His-205 contributes to the Mn(2+) binding site. The catalytic subdomain B stretch occupies residues 277–339 (PFNSPAMPGG…PCSRVGHVFR (63 aa)). Trp-308 contacts substrate. His-336 serves as a coordination point for Mn(2+). Substrate is bound by residues Arg-339 and Tyr-344. Residues 418 to 421 (HDEL) carry the Prevents secretion from ER motif.

It belongs to the glycosyltransferase 2 family. GalNAc-T subfamily. Mn(2+) serves as cofactor.

The protein resides in the golgi apparatus membrane. It participates in protein modification; protein glycosylation. Its function is as follows. Potential glycopeptide transferase involved in O-linked oligosaccharide biosynthesis. In contrast to other members of the family, it does not act as a peptide transferase that transfers GalNAc onto serine or threonine residue on peptides that have been tested. Some peptide transferase activity is however not excluded, considering that its appropriate peptide substrate may remain unidentified. In Caenorhabditis elegans, this protein is Probable N-acetylgalactosaminyltransferase 8 (gly-8).